The sequence spans 661 residues: uncharacterized protein (661 aa).

The next 16 membrane-spanning stretches (helical) occupy residues 27 to 47 (LAIGLLGVCAVVAAFGLVSGA), 68 to 88 (VGFFAASLAGALCLGALIHVV), 116 to 136 (LWLGLAATMVVIQAAHDTGVG), 150 to 170 (VAASEMARGWIVAAICALVVA), 179 to 199 (WLGHVVLLVPTVLAVVATAVT), 214 to 234 (AAIVFAVAFATLTGLKIAAAL), 251 to 271 (GALALAYGAMLLYLFIPGWAV), 279 to 299 (GLLAGVILTSVWLFDCWRLLV), 313 to 333 (GAALAMMAAMASIAAMAVMTA), 369 to 389 (SLIGAAGVVLAIGYAAGFAAL), 396 to 416 (WPVGRLIAWLTGCAALVFTSG), 435 to 455 (MTLNMFIPVLLVLGGPVTLAL), 488 to 508 (PITAFVLFVASPYIVYFTPLF), 519 to 539 (EFMAIHFLVVGYLFYWAIIGI), 552 to 572 (IGLLFAVMPFHAFFGIALMTM), and 599 to 619 (GGGIAWSLTELPVIMVIVALV).

This sequence to M.leprae ML1998.

The protein resides in the cell membrane. This is an uncharacterized protein from Mycobacterium tuberculosis (strain CDC 1551 / Oshkosh).